The primary structure comprises 628 residues: MAIEKLPPQLANQIAAGEVVERPASVIKELVENSLDAGATRVDIEIEKGGAKLIRIRDNGSGIPKEDLSLALSRHATSKLKSLDDLEAILSFGFRGEALASISSVSRLILTSRTAEQTEAWQAHAEGTEMAVKVLPAAHPVGSTVEAVDLFFNTPARRRFLKSDKTEFTHIDEWLKRIALARRDIHFTLKHNGKTVRNYRPANTEIQYIQRLGQICGKAFAETCLRIECEHNDLKLSGYLQSPSAASGYSETQYFYVNGRLVKDRLVNHAVRQAFSQYAEGISPGYVLMLELDPHQVDVNVHPAKHEVRFHQSRYVHDYILQALQSAMAQSTQLSVDIEPESEQTTAWQTSPTRGAVAPSHYVDESKSKPSAVFDVRERHSSASQAGYSGGGGSYRSQLKPASRNSEVSLPSQTSIRAYGELLSTDSVQTQSTNVPLRPAAHQAGMMSTSHGAASMPPVIAGQYWVLVKEDKISLLDIAMVAKAALKAEIAAKLAQGIIGQPLLMPVAISVDDDWPEIIDNREQLLRKLGIELSIRLGQLIIKKVPPYLRDSQLAALIPELLEWIRLELPSDAAVIKWLAEQAANRFTSASEAWFAFSALPDDVQCELYNHSQELPWEQWMKENQSDR.

The tract at residues 335–411 (SVDIEPESEQ…ASRNSEVSLP (77 aa)) is disordered. The span at 343-353 (EQTTAWQTSPT) shows a compositional bias: polar residues.

This sequence belongs to the DNA mismatch repair MutL/HexB family.

This protein is involved in the repair of mismatches in DNA. It is required for dam-dependent methyl-directed DNA mismatch repair. May act as a 'molecular matchmaker', a protein that promotes the formation of a stable complex between two or more DNA-binding proteins in an ATP-dependent manner without itself being part of a final effector complex. The protein is DNA mismatch repair protein MutL of Shewanella pealeana (strain ATCC 700345 / ANG-SQ1).